A 228-amino-acid chain; its full sequence is 2,3-bisphosphoglycerate-dependent phosphoglycerate mutase (228 aa).

Substrate is bound by residues 8–15, 21–22, arginine 60, 87–90, lysine 98, 114–115, and 183–184; these read RHGQSVWN, TG, ERHY, RR, and GN. The Tele-phosphohistidine intermediate role is filled by histidine 9. The active-site Proton donor/acceptor is the glutamate 87.

Belongs to the phosphoglycerate mutase family. BPG-dependent PGAM subfamily.

It catalyses the reaction (2R)-2-phosphoglycerate = (2R)-3-phosphoglycerate. It functions in the pathway carbohydrate degradation; glycolysis; pyruvate from D-glyceraldehyde 3-phosphate: step 3/5. Functionally, catalyzes the interconversion of 2-phosphoglycerate and 3-phosphoglycerate. The protein is 2,3-bisphosphoglycerate-dependent phosphoglycerate mutase of Staphylococcus carnosus (strain TM300).